A 285-amino-acid polypeptide reads, in one-letter code: Acetyl-coenzyme A carboxylase carboxyl transferase subunit beta (285 aa).

One can recognise a CoA carboxyltransferase N-terminal domain in the interval 22–285; the sequence is LWTKCEACGA…HPGVAYAPGV (264 aa). Residues cysteine 26, cysteine 29, cysteine 45, and cysteine 48 each contribute to the Zn(2+) site. A C4-type zinc finger spans residues 26 to 48; that stretch reads CEACGAQIYKKEFQENLHVCPKC.

It belongs to the AccD/PCCB family. As to quaternary structure, acetyl-CoA carboxylase is a heterohexamer composed of biotin carboxyl carrier protein (AccB), biotin carboxylase (AccC) and two subunits each of ACCase subunit alpha (AccA) and ACCase subunit beta (AccD). Zn(2+) is required as a cofactor.

It is found in the cytoplasm. The enzyme catalyses N(6)-carboxybiotinyl-L-lysyl-[protein] + acetyl-CoA = N(6)-biotinyl-L-lysyl-[protein] + malonyl-CoA. Its pathway is lipid metabolism; malonyl-CoA biosynthesis; malonyl-CoA from acetyl-CoA: step 1/1. Functionally, component of the acetyl coenzyme A carboxylase (ACC) complex. Biotin carboxylase (BC) catalyzes the carboxylation of biotin on its carrier protein (BCCP) and then the CO(2) group is transferred by the transcarboxylase to acetyl-CoA to form malonyl-CoA. The protein is Acetyl-coenzyme A carboxylase carboxyl transferase subunit beta of Thermus thermophilus (strain ATCC 27634 / DSM 579 / HB8).